The primary structure comprises 556 residues: Testis-specific protein 10-interacting protein (556 aa).

Over residues 1–16 (MGQDTDMLNTYQQLVR) the composition is skewed to polar residues. Disordered regions lie at residues 1 to 31 (MGQDTDMLNTYQQLVRTPSVRPGQDVRLQAP), 50 to 102 (GCLG…LLPR), 123 to 155 (LQPSSPTPGHQALPMPSSFSQRQSRRKSTANLP), and 179 to 309 (GGVS…QWRK). Polar residues predominate over residues 208-219 (GSASDKQVQLQS). The span at 244–258 (SEEEQFSEATEEAEE) shows a compositional bias: acidic residues. Positions 289–301 (QGQSQGSSPSFNN) are enriched in polar residues. Positions 379–464 (RQEATRSLLQ…LQGIQHRVQA (86 aa)) form a coiled coil. The interval 503 to 556 (AGKVDREGTPRKPRSHRSMGVRMEHSPQRPPRTEPTGSQPDRHYNPSLDPECSP) is disordered.

In Homo sapiens (Human), this protein is Testis-specific protein 10-interacting protein (TSGA10IP).